Reading from the N-terminus, the 433-residue chain is 28S rRNA (cytosine-C(5))-methyltransferase (433 aa).

S-adenosyl-L-methionine is bound by residues 235–241, Glu-259, Asp-286, and Asp-304; that span reads CAAPGMK. The active-site Nucleophile is Cys-357.

This sequence belongs to the class I-like SAM-binding methyltransferase superfamily. RsmB/NOP family.

It carries out the reaction a cytidine in 28S rRNA + S-adenosyl-L-methionine = a 5-methylcytidine in 28S rRNA + S-adenosyl-L-homocysteine + H(+). In terms of biological role, S-adenosyl-L-methionine-dependent methyltransferase that specifically methylates the C(5) position of a cytosine in 28S rRNA. The polypeptide is 28S rRNA (cytosine-C(5))-methyltransferase (Drosophila melanogaster (Fruit fly)).